Reading from the N-terminus, the 499-residue chain is Probable malate:quinone oxidoreductase (499 aa).

It belongs to the MQO family. It depends on FAD as a cofactor.

It catalyses the reaction (S)-malate + a quinone = a quinol + oxaloacetate. Its pathway is carbohydrate metabolism; tricarboxylic acid cycle; oxaloacetate from (S)-malate (quinone route): step 1/1. This is Probable malate:quinone oxidoreductase from Exiguobacterium sp. (strain ATCC BAA-1283 / AT1b).